A 266-amino-acid chain; its full sequence is Glutamate racemase (266 aa).

Substrate is bound by residues 9 to 10 (DS) and 41 to 42 (YG). C72 serves as the catalytic Proton donor/acceptor. 73 to 74 (NT) contributes to the substrate binding site. C184 serves as the catalytic Proton donor/acceptor. Residue 185-186 (TH) participates in substrate binding.

This sequence belongs to the aspartate/glutamate racemases family.

It carries out the reaction L-glutamate = D-glutamate. It participates in cell wall biogenesis; peptidoglycan biosynthesis. Its function is as follows. Provides the (R)-glutamate required for cell wall biosynthesis. In Staphylococcus carnosus (strain TM300), this protein is Glutamate racemase.